Consider the following 267-residue polypeptide: 4-hydroxy-tetrahydrodipicolinate reductase (267 aa).

8–13 contacts NAD(+); sequence GASGRM. Residue Arg35 participates in NADP(+) binding. Residues 98-100 and 122-125 contribute to the NAD(+) site; these read GTT and APNM. Residue His155 is the Proton donor/acceptor of the active site. His156 contributes to the (S)-2,3,4,5-tetrahydrodipicolinate binding site. The active-site Proton donor is Lys159. A (S)-2,3,4,5-tetrahydrodipicolinate-binding site is contributed by 165 to 166; sequence GT.

The protein belongs to the DapB family.

It is found in the cytoplasm. The catalysed reaction is (S)-2,3,4,5-tetrahydrodipicolinate + NAD(+) + H2O = (2S,4S)-4-hydroxy-2,3,4,5-tetrahydrodipicolinate + NADH + H(+). It catalyses the reaction (S)-2,3,4,5-tetrahydrodipicolinate + NADP(+) + H2O = (2S,4S)-4-hydroxy-2,3,4,5-tetrahydrodipicolinate + NADPH + H(+). It functions in the pathway amino-acid biosynthesis; L-lysine biosynthesis via DAP pathway; (S)-tetrahydrodipicolinate from L-aspartate: step 4/4. Functionally, catalyzes the conversion of 4-hydroxy-tetrahydrodipicolinate (HTPA) to tetrahydrodipicolinate. The chain is 4-hydroxy-tetrahydrodipicolinate reductase from Hahella chejuensis (strain KCTC 2396).